The primary structure comprises 103 residues: Small ribosomal subunit protein uS10 (103 aa).

Belongs to the universal ribosomal protein uS10 family. As to quaternary structure, part of the 30S ribosomal subunit.

Functionally, involved in the binding of tRNA to the ribosomes. This Pseudomonas aeruginosa (strain LESB58) protein is Small ribosomal subunit protein uS10.